Here is a 208-residue protein sequence, read N- to C-terminus: Probable DNA-3-methyladenine glycosylase (208 aa).

The protein belongs to the DNA glycosylase MPG family.

It localises to the nucleus. The catalysed reaction is Hydrolysis of alkylated DNA, releasing 3-methyladenine, 3-methylguanine, 7-methylguanine and 7-methyladenine.. Functionally, hydrolysis of the deoxyribose N-glycosidic bond to excise 3-methyladenine, and 7-methylguanine from the damaged DNA polymer formed by alkylation lesions. In Encephalitozoon cuniculi (strain GB-M1) (Microsporidian parasite), this protein is Probable DNA-3-methyladenine glycosylase.